The sequence spans 839 residues: Probable inorganic carbon transporter subunit DabA (839 aa).

Residues cysteine 353, aspartate 355, histidine 537, and cysteine 552 each contribute to the Zn(2+) site.

The protein belongs to the inorganic carbon transporter (TC 9.A.2) DabA family. Forms a complex with DabB. The cofactor is Zn(2+).

The protein localises to the cell membrane. Part of an energy-coupled inorganic carbon pump. The chain is Probable inorganic carbon transporter subunit DabA from Chloroflexus aggregans (strain MD-66 / DSM 9485).